Consider the following 493-residue polypeptide: Glutamyl-tRNA(Gln) amidotransferase subunit A (493 aa).

Catalysis depends on charge relay system residues Lys79 and Ser159. Ser183 (acyl-ester intermediate) is an active-site residue.

It belongs to the amidase family. GatA subfamily. In terms of assembly, heterotrimer of A, B and C subunits.

The catalysed reaction is L-glutamyl-tRNA(Gln) + L-glutamine + ATP + H2O = L-glutaminyl-tRNA(Gln) + L-glutamate + ADP + phosphate + H(+). In terms of biological role, allows the formation of correctly charged Gln-tRNA(Gln) through the transamidation of misacylated Glu-tRNA(Gln) in organisms which lack glutaminyl-tRNA synthetase. The reaction takes place in the presence of glutamine and ATP through an activated gamma-phospho-Glu-tRNA(Gln). The polypeptide is Glutamyl-tRNA(Gln) amidotransferase subunit A (Brucella canis (strain ATCC 23365 / NCTC 10854 / RM-666)).